A 506-amino-acid polypeptide reads, in one-letter code: Anaerobic nitric oxide reductase transcription regulator NorR (506 aa).

4-aspartylphosphate is present on Asp57. The region spanning 187–416 is the Sigma-54 factor interaction domain; that stretch reads MIGLSPAMTQ…LEHAIHRAVV (230 aa). Residues 215–222 and 278–287 contribute to the ATP site; these read GETGTGKE and ADNGTLFLDE. Residues 481-500 constitute a DNA-binding region (H-T-H motif); sequence WAASARALETDVANLHRLAK.

It participates in nitrogen metabolism; nitric oxide reduction. Functionally, required for the expression of anaerobic nitric oxide (NO) reductase, acts as a transcriptional activator for at least the norVW operon. Activation also requires sigma-54. The chain is Anaerobic nitric oxide reductase transcription regulator NorR from Salmonella arizonae (strain ATCC BAA-731 / CDC346-86 / RSK2980).